The chain runs to 160 residues: Endoribonuclease YbeY (160 aa).

H112, H116, and H122 together coordinate Zn(2+). Residues 141 to 160 (ELGHPDPYACDDEEPPSKEK) form a disordered region.

This sequence belongs to the endoribonuclease YbeY family. Zn(2+) serves as cofactor.

The protein localises to the cytoplasm. Functionally, single strand-specific metallo-endoribonuclease involved in late-stage 70S ribosome quality control and in maturation of the 3' terminus of the 16S rRNA. This chain is Endoribonuclease YbeY, found in Pseudomonas aeruginosa (strain UCBPP-PA14).